Consider the following 195-residue polypeptide: Myelin-associated neurite-outgrowth inhibitor (195 aa).

Residues Met-1–Lys-18 are Cytoplasmic-facing. The chain crosses the membrane as a helical span at residues Gly-19 to Pro-43. Residues Gly-44–Asn-143 lie on the Extracellular side of the membrane. Residues Gly-144–Leu-163 traverse the membrane as a helical segment. Over Thr-164–Trp-195 the chain is Cytoplasmic.

It belongs to the FAM168 family.

It localises to the cytoplasm. The protein localises to the perinuclear region. Its subcellular location is the cell membrane. The protein resides in the cell projection. It is found in the axon. Inhibitor of neuronal axonal outgrowth. This Danio rerio (Zebrafish) protein is Myelin-associated neurite-outgrowth inhibitor (fam168b).